The chain runs to 984 residues: Shutoff protein (984 aa).

The segment at 131–231 (GVAAESDPSD…DLERDALVAP (101 aa)) is disordered. Acidic residues predominate over residues 137–147 (DPSDDEPDPEP). Residues 148 to 159 (EYDHREADHDSD) are compositionally biased toward basic and acidic residues. A compositionally biased stretch (acidic residues) spans 176-186 (VDEEPQDDSPS). A compositionally biased stretch (polar residues) spans 190 to 202 (TASTVIEEAQTSA). The span at 205-216 (DSHDDDTHRDDG) shows a compositional bias: basic and acidic residues. Residues 411–476 (LMETLLQPFA…AVRYTATLEL (66 aa)) are binding to host EIF4G. Residues 479 to 597 (RVFREPSMVK…RLYSLPNPTA (119 aa)) form the RRM domain. Disordered regions lie at residues 810 to 853 (GVYK…GNRA) and 876 to 984 (KVGP…RQEE). Y812 carries the post-translational modification Phosphotyrosine; by host. Basic residues predominate over residues 913–923 (AGGRRFGRRNT). Low complexity predominate over residues 945–958 (RGQQGEHPTTSPSA).

This sequence belongs to the adenoviridae shutoff protein family. In terms of assembly, monomer. Interacts with hexon protein; this interaction allows chaperoning and trimerization of hexon proteins. Interacts (via N-terminus) with host initiation factor EIF4G (via C-terminus). Interacts (via RRM domain) with viral mRNAs that contain the tripartite leader; this interaction allows ribosome shunting and expression of viral late mRNAs. Might be cleaved by the viral protease. In terms of processing, phosphorylated. Tyrosine phosphorylation enhances preferential binding to tripartite leader mRNAs and allows ribosome shunting. Post-translationally, methylated. Asymmetric dimethylation by host PRMT1 of the Arg/Gly-rich region may regulate shutoff protein binding to hexon and promote the capsid assembly in the nucleus.

It localises to the host cytoplasm. Its function is as follows. Protein that inhibits host translation while promoting late viral translation by ribosome shunting. Blocks host cap-dependent translation by binding to eIF4G, displacing MKNK1 from cap initiation complexes and preventing EIF4E phosphorylation. Binds to the tripartite leader sequence of viral late mRNAs and recruits host eIF4G, PABPC1/poly-A binding protein and 40S ribosomes subunits on viral mRNAs, allowing ribosome shunting and efficient translation of late viral mRNAs even though conventional translation via ribosome scanning from the cap has been shut off in the host cell. During assembly, acts as a chaperone protein that helps hexon proteins assembly into trimers. The chain is Shutoff protein from Galliformes (FAdV-1).